The sequence spans 501 residues: Melianol synthase CYP71BQ5 (501 aa).

Residues 1–21 form a helical membrane-spanning segment; sequence MEFRLPVLLSFLLFFLMLVRH. A heme-binding site is contributed by Cys-439.

This sequence belongs to the cytochrome P450 family. Heme serves as cofactor. As to expression, mainly expressed in petioles and roots, and, to a lower extent, in leaves.

It localises to the membrane. It carries out the reaction dihydroniloticin + 2 reduced [NADPH--hemoprotein reductase] + 2 O2 = melianol + 2 oxidized [NADPH--hemoprotein reductase] + 3 H2O + 2 H(+). The protein operates within secondary metabolite biosynthesis; terpenoid biosynthesis. Monooxygenase involved in the biosynthesis of limonoids triterpene natural products such as azadirachtin, an antifeedant widely used as bioinsecticide, and possessing many medicinal applications including anti-tumoral, anti-malarial, anti-rheumatic, antibacterial, anti-inflammatory, anti-pyretic and diuretic effects. Catalyzes the conversion of dihydroniloticin to the protolimonoid melianol. In Melia azedarach (Chinaberry tree), this protein is Melianol synthase CYP71BQ5.